Reading from the N-terminus, the 505-residue chain is Flagellin (505 aa).

This sequence belongs to the bacterial flagellin family.

The protein resides in the secreted. Its subcellular location is the bacterial flagellum. In terms of biological role, flagellin is the subunit protein which polymerizes to form the filaments of bacterial flagella. In Salmonella derby, this protein is Flagellin (fliC).